The primary structure comprises 140 residues: Cysteine proteinase inhibitor 1 (140 aa).

The signal sequence occupies residues 1 to 26 (MRKYRVAGLVAALLVLHSLATPSAQA). The Cystatin domain occupies 48–135 (GGVEPVGNEN…KELQEFKPVD (88 aa)). The Secondary area of contact motif lies at 91–95 (QVVAG).

It belongs to the cystatin family. Phytocystatin subfamily.

It is found in the secreted. Its function is as follows. There are two distinct cystatins in rice seeds (Oryzacystatin-1 and -2) with different specificities against cysteine proteinases. May be involved in the control of germination by inhibition of endogenous cysteine proteinases. May play a role in defense by inhibiting exogenous proteases such as those present in digestive tracks of insects and nematodes. In Oryza sativa subsp. japonica (Rice), this protein is Cysteine proteinase inhibitor 1.